Reading from the N-terminus, the 174-residue chain is Large ribosomal subunit protein uL10 (174 aa).

Belongs to the universal ribosomal protein uL10 family. Part of the ribosomal stalk of the 50S ribosomal subunit. The N-terminus interacts with L11 and the large rRNA to form the base of the stalk. The C-terminus forms an elongated spine to which L12 dimers bind in a sequential fashion forming a multimeric L10(L12)X complex.

In terms of biological role, forms part of the ribosomal stalk, playing a central role in the interaction of the ribosome with GTP-bound translation factors. This is Large ribosomal subunit protein uL10 from Synechococcus sp. (strain RCC307).